The following is a 337-amino-acid chain: Ornithine carbamoyltransferase (337 aa).

Carbamoyl phosphate is bound by residues 56–59 (STRT), Gln-83, Arg-107, and 134–137 (HPTQ). L-ornithine contacts are provided by residues Asn-168, Asp-232, and 236–237 (SM). Carbamoyl phosphate contacts are provided by residues 274–275 (CL) and Arg-320.

Belongs to the aspartate/ornithine carbamoyltransferase superfamily. OTCase family.

The protein resides in the cytoplasm. The enzyme catalyses carbamoyl phosphate + L-ornithine = L-citrulline + phosphate + H(+). It functions in the pathway amino-acid biosynthesis; L-arginine biosynthesis; L-arginine from L-ornithine and carbamoyl phosphate: step 1/3. Its function is as follows. Reversibly catalyzes the transfer of the carbamoyl group from carbamoyl phosphate (CP) to the N(epsilon) atom of ornithine (ORN) to produce L-citrulline. In Shigella flexneri, this protein is Ornithine carbamoyltransferase (argI).